The chain runs to 173 residues: C-phycocyanin-3 beta subunit (173 aa).

Asparagine 73 carries the N4-methylasparagine modification. Positions 83 and 154 each coordinate (2R,3E)-phycocyanobilin.

The protein belongs to the phycobiliprotein family. As to quaternary structure, heterodimer of an alpha and a beta subunit, which further assembles into trimers and the trimers into hexamers. Contains two covalently linked bilin chromophores.

The protein resides in the cellular thylakoid membrane. Its function is as follows. Light-harvesting photosynthetic bile pigment-protein from the phycobiliprotein complex (phycobilisome, PBS). Phycocyanin is the major phycobiliprotein in the PBS rod. In Microchaete diplosiphon (Fremyella diplosiphon), this protein is C-phycocyanin-3 beta subunit (cpcB3).